The following is a 301-amino-acid chain: UDP-N-acetylenolpyruvoylglucosamine reductase (301 aa).

Positions 27–194 (RVGGPADVVF…LDAIFEGTPD (168 aa)) constitute an FAD-binding PCMH-type domain. Arg-172 is a catalytic residue. Catalysis depends on Ser-223, which acts as the Proton donor. Residue Glu-293 is part of the active site.

It belongs to the MurB family. Requires FAD as cofactor.

It localises to the cytoplasm. It catalyses the reaction UDP-N-acetyl-alpha-D-muramate + NADP(+) = UDP-N-acetyl-3-O-(1-carboxyvinyl)-alpha-D-glucosamine + NADPH + H(+). The protein operates within cell wall biogenesis; peptidoglycan biosynthesis. Cell wall formation. This is UDP-N-acetylenolpyruvoylglucosamine reductase from Caulobacter vibrioides (strain NA1000 / CB15N) (Caulobacter crescentus).